The following is a 352-amino-acid chain: Anthranilate phosphoribosyltransferase (352 aa).

Residues glycine 94, 97 to 98 (GS), serine 102, 104 to 107 (NIST), 122 to 130 (KHGNRAVSS), and serine 134 contribute to the 5-phospho-alpha-D-ribose 1-diphosphate site. Glycine 94 contributes to the anthranilate binding site. Serine 106 serves as a coordination point for Mg(2+). Anthranilate is bound at residue asparagine 125. Arginine 180 is an anthranilate binding site. Mg(2+)-binding residues include aspartate 239 and glutamate 240.

The protein belongs to the anthranilate phosphoribosyltransferase family. As to quaternary structure, homodimer. The cofactor is Mg(2+).

It carries out the reaction N-(5-phospho-beta-D-ribosyl)anthranilate + diphosphate = 5-phospho-alpha-D-ribose 1-diphosphate + anthranilate. It functions in the pathway amino-acid biosynthesis; L-tryptophan biosynthesis; L-tryptophan from chorismate: step 2/5. Its function is as follows. Catalyzes the transfer of the phosphoribosyl group of 5-phosphorylribose-1-pyrophosphate (PRPP) to anthranilate to yield N-(5'-phosphoribosyl)-anthranilate (PRA). The sequence is that of Anthranilate phosphoribosyltransferase from Geobacter sp. (strain M21).